The sequence spans 141 residues: 6,7-dimethyl-8-ribityllumazine synthase (141 aa).

Residues F14, 46-48, and 70-72 contribute to the 5-amino-6-(D-ribitylamino)uracil site; these read VFD and CVI. Position 75 to 76 (75 to 76) interacts with (2S)-2-hydroxy-3-oxobutyl phosphate; sequence ET. The active-site Proton donor is the H78. L103 is a binding site for 5-amino-6-(D-ribitylamino)uracil. Residue R118 participates in (2S)-2-hydroxy-3-oxobutyl phosphate binding.

Forms an icosahedral capsid composed of 60 subunits, arranged as a dodecamer of pentamers.

The catalysed reaction is (2S)-2-hydroxy-3-oxobutyl phosphate + 5-amino-6-(D-ribitylamino)uracil = 6,7-dimethyl-8-(1-D-ribityl)lumazine + phosphate + 2 H2O + H(+). The protein operates within cofactor biosynthesis; riboflavin biosynthesis; riboflavin from 2-hydroxy-3-oxobutyl phosphate and 5-amino-6-(D-ribitylamino)uracil: step 1/2. Functionally, catalyzes the formation of 6,7-dimethyl-8-ribityllumazine by condensation of 5-amino-6-(D-ribitylamino)uracil with 3,4-dihydroxy-2-butanone 4-phosphate. This is the penultimate step in the biosynthesis of riboflavin. This Methanocaldococcus jannaschii (strain ATCC 43067 / DSM 2661 / JAL-1 / JCM 10045 / NBRC 100440) (Methanococcus jannaschii) protein is 6,7-dimethyl-8-ribityllumazine synthase (ribH).